The chain runs to 505 residues: One cut domain family member 2 (505 aa).

Disordered regions lie at residues 29–94 (LGTL…GTAA), 165–190 (KFHHPHPHHHPHHHHHHHHHHQRLSG), and 275–333 (EQHL…QLEE). Residues 35 to 56 (PVGGGSGGGGGGGGGGGGGGPG) show a composition bias toward gly residues. The span at 167-187 (HHPHPHHHPHHHHHHHHHHQR) shows a compositional bias: basic residues. The segment at residues 325–411 (VATSGQLEEI…QRMSALRLAA (87 aa)) is a DNA-binding region (CUT). Residues 427–486 (QKKSRLVFTDLQRRTLFAIFKENKRPSKEMQITISQQLGLELTTVSNFFMNARRRSLEKW) constitute a DNA-binding region (homeobox).

Belongs to the CUT homeobox family.

The protein resides in the nucleus. Transcriptional activator. Activates the transcription of a number of liver genes such as HNF3B. This Mus musculus (Mouse) protein is One cut domain family member 2 (Onecut2).